The sequence spans 517 residues: ATP synthase subunit alpha 1 (517 aa).

174–181 (GDRQTGKT) contacts ATP.

It belongs to the ATPase alpha/beta chains family. As to quaternary structure, F-type ATPases have 2 components, CF(1) - the catalytic core - and CF(0) - the membrane proton channel. CF(1) has five subunits: alpha(3), beta(3), gamma(1), delta(1), epsilon(1). CF(0) has three main subunits: a(1), b(2) and c(9-12). The alpha and beta chains form an alternating ring which encloses part of the gamma chain. CF(1) is attached to CF(0) by a central stalk formed by the gamma and epsilon chains, while a peripheral stalk is formed by the delta and b chains.

The protein localises to the cell inner membrane. The enzyme catalyses ATP + H2O + 4 H(+)(in) = ADP + phosphate + 5 H(+)(out). Its function is as follows. Produces ATP from ADP in the presence of a proton gradient across the membrane. The alpha chain is a regulatory subunit. The protein is ATP synthase subunit alpha 1 of Polaromonas naphthalenivorans (strain CJ2).